The chain runs to 464 residues: Glutamate--tRNA ligase (464 aa).

The 'HIGH' region signature appears at 11-21; the sequence is PSPTGYLHIGG. Residues 253–257 carry the 'KMSKS' region motif; it reads KLSKR. K256 serves as a coordination point for ATP.

It belongs to the class-I aminoacyl-tRNA synthetase family. Glutamate--tRNA ligase type 1 subfamily. In terms of assembly, monomer.

The protein resides in the cytoplasm. The enzyme catalyses tRNA(Glu) + L-glutamate + ATP = L-glutamyl-tRNA(Glu) + AMP + diphosphate. In terms of biological role, catalyzes the attachment of glutamate to tRNA(Glu) in a two-step reaction: glutamate is first activated by ATP to form Glu-AMP and then transferred to the acceptor end of tRNA(Glu). This chain is Glutamate--tRNA ligase, found in Metamycoplasma arthritidis (strain 158L3-1) (Mycoplasma arthritidis).